We begin with the raw amino-acid sequence, 245 residues long: Ribonuclease PH (245 aa).

Phosphate-binding positions include R86 and G124–R126.

It belongs to the RNase PH family. In terms of assembly, homohexameric ring arranged as a trimer of dimers.

It catalyses the reaction tRNA(n+1) + phosphate = tRNA(n) + a ribonucleoside 5'-diphosphate. Its function is as follows. Phosphorolytic 3'-5' exoribonuclease that plays an important role in tRNA 3'-end maturation. Removes nucleotide residues following the 3'-CCA terminus of tRNAs; can also add nucleotides to the ends of RNA molecules by using nucleoside diphosphates as substrates, but this may not be physiologically important. Probably plays a role in initiation of 16S rRNA degradation (leading to ribosome degradation) during starvation. This Bacillus velezensis (strain DSM 23117 / BGSC 10A6 / LMG 26770 / FZB42) (Bacillus amyloliquefaciens subsp. plantarum) protein is Ribonuclease PH.